Here is a 145-residue protein sequence, read N- to C-terminus: uncharacterized protein (145 aa).

This is an uncharacterized protein from Synechocystis sp. (strain ATCC 27184 / PCC 6803 / Kazusa).